The primary structure comprises 469 residues: Ribulose bisphosphate carboxylase large chain (469 aa).

The substrate site is built by Asn-115 and Thr-165. The active-site Proton acceptor is Lys-167. A substrate-binding site is contributed by Lys-169. Mg(2+) is bound by residues Lys-193, Asp-195, and Glu-196. Position 193 is an N6-carboxylysine (Lys-193). Residue His-286 is the Proton acceptor of the active site. Substrate is bound by residues Arg-287, His-319, and Ser-371.

The protein belongs to the RuBisCO large chain family. Type I subfamily. As to quaternary structure, heterohexadecamer of 8 large chains and 8 small chains. Requires Mg(2+) as cofactor.

It localises to the plastid. The protein resides in the organellar chromatophore. It carries out the reaction 2 (2R)-3-phosphoglycerate + 2 H(+) = D-ribulose 1,5-bisphosphate + CO2 + H2O. It catalyses the reaction D-ribulose 1,5-bisphosphate + O2 = 2-phosphoglycolate + (2R)-3-phosphoglycerate + 2 H(+). Functionally, ruBisCO catalyzes two reactions: the carboxylation of D-ribulose 1,5-bisphosphate, the primary event in carbon dioxide fixation, as well as the oxidative fragmentation of the pentose substrate. Both reactions occur simultaneously and in competition at the same active site. The polypeptide is Ribulose bisphosphate carboxylase large chain (Paulinella chromatophora).